A 155-amino-acid polypeptide reads, in one-letter code: E3 ubiquitin-protein ligase RHA2A (155 aa).

An RING-type; atypical zinc finger spans residues 86–128 (CVVCLSKLKEGEEVRKLECRHVFHKKCLEGWLHQFNFTCPLCR).

As to quaternary structure, interacts with NAC019 and NAC055. In terms of tissue distribution, expressed in stems, flowers, cauline leaves, rosettes, siliques, seeds and roots.

Its subcellular location is the cytoplasm. The protein resides in the nucleus. The enzyme catalyses S-ubiquitinyl-[E2 ubiquitin-conjugating enzyme]-L-cysteine + [acceptor protein]-L-lysine = [E2 ubiquitin-conjugating enzyme]-L-cysteine + N(6)-ubiquitinyl-[acceptor protein]-L-lysine.. Its pathway is protein modification; protein ubiquitination. Its function is as follows. E3 ubiquitin-protein ligase involved in the positive regulation of abscisic acid (ABA) signaling and responses to salt and osmotic stresses during seed germination and early seedling development. Acts additively with RHA2B in regulating ABA signaling and drought response. Possesses E3 ubiquitin ligase activity in vitro. The chain is E3 ubiquitin-protein ligase RHA2A from Arabidopsis thaliana (Mouse-ear cress).